The following is a 215-amino-acid chain: Ribonuclease T (215 aa).

One can recognise an Exonuclease domain in the interval 20 to 194 (VVIDVETAGF…YDTEQTAQLF (175 aa)). Mg(2+)-binding residues include D23, E25, H181, and D186. H181 acts as the Proton donor/acceptor in catalysis.

This sequence belongs to the RNase T family. In terms of assembly, homodimer. Mg(2+) serves as cofactor.

Trims short 3' overhangs of a variety of RNA species, leaving a one or two nucleotide 3' overhang. Responsible for the end-turnover of tRNA: specifically removes the terminal AMP residue from uncharged tRNA (tRNA-C-C-A). Also appears to be involved in tRNA biosynthesis. The sequence is that of Ribonuclease T from Klebsiella pneumoniae subsp. pneumoniae (strain ATCC 700721 / MGH 78578).